Reading from the N-terminus, the 356-residue chain is UDP-3-O-acylglucosamine N-acyltransferase (356 aa).

H251 acts as the Proton acceptor in catalysis.

Belongs to the transferase hexapeptide repeat family. LpxD subfamily. In terms of assembly, homotrimer.

The catalysed reaction is a UDP-3-O-[(3R)-3-hydroxyacyl]-alpha-D-glucosamine + a (3R)-hydroxyacyl-[ACP] = a UDP-2-N,3-O-bis[(3R)-3-hydroxyacyl]-alpha-D-glucosamine + holo-[ACP] + H(+). Its pathway is bacterial outer membrane biogenesis; LPS lipid A biosynthesis. Its function is as follows. Catalyzes the N-acylation of UDP-3-O-acylglucosamine using 3-hydroxyacyl-ACP as the acyl donor. Is involved in the biosynthesis of lipid A, a phosphorylated glycolipid that anchors the lipopolysaccharide to the outer membrane of the cell. In Ralstonia nicotianae (strain ATCC BAA-1114 / GMI1000) (Ralstonia solanacearum), this protein is UDP-3-O-acylglucosamine N-acyltransferase.